Reading from the N-terminus, the 237-residue chain is Ribonuclease PH (237 aa).

Phosphate contacts are provided by residues arginine 86 and 124-126; that span reads GTR.

The protein belongs to the RNase PH family. In terms of assembly, homohexameric ring arranged as a trimer of dimers.

It carries out the reaction tRNA(n+1) + phosphate = tRNA(n) + a ribonucleoside 5'-diphosphate. In terms of biological role, phosphorolytic 3'-5' exoribonuclease that plays an important role in tRNA 3'-end maturation. Removes nucleotide residues following the 3'-CCA terminus of tRNAs; can also add nucleotides to the ends of RNA molecules by using nucleoside diphosphates as substrates, but this may not be physiologically important. Probably plays a role in initiation of 16S rRNA degradation (leading to ribosome degradation) during starvation. The chain is Ribonuclease PH from Methylorubrum extorquens (strain CM4 / NCIMB 13688) (Methylobacterium extorquens).